Reading from the N-terminus, the 471-residue chain is Glutamate--tRNA ligase (471 aa).

Positions 9-19 match the 'HIGH' region motif; the sequence is PSPTGYLHVGG. Zn(2+) contacts are provided by Cys98, Cys100, Cys125, and His127. The short motif at 237–241 is the 'KMSKS' region element; sequence KLSKR. Lys240 lines the ATP pocket.

Belongs to the class-I aminoacyl-tRNA synthetase family. Glutamate--tRNA ligase type 1 subfamily. In terms of assembly, monomer. Requires Zn(2+) as cofactor.

The protein resides in the cytoplasm. The catalysed reaction is tRNA(Glu) + L-glutamate + ATP = L-glutamyl-tRNA(Glu) + AMP + diphosphate. Its function is as follows. Catalyzes the attachment of glutamate to tRNA(Glu) in a two-step reaction: glutamate is first activated by ATP to form Glu-AMP and then transferred to the acceptor end of tRNA(Glu). This is Glutamate--tRNA ligase from Salmonella dublin (strain CT_02021853).